We begin with the raw amino-acid sequence, 118 residues long: CLAVATA3/ESR (CLE)-related protein 12 (118 aa).

An N-terminal signal peptide occupies residues 1–35 (MLRISSSSSMALKFSQILFIVLWLSLFFLLLHHLY). Composition is skewed to basic and acidic residues over residues 75 to 91 (TPFH…RSGE) and 98 to 108 (IDPRYGVEKRR). The interval 75–118 (TPFHSRDNSRHNHRSGEQYDGDEIDPRYGVEKRRVPSGPNPLHH) is disordered. 2 positions are modified to hydroxyproline: proline 110 and proline 113. O-linked (Ara...) hydroxyproline glycosylation occurs at proline 113.

Belongs to the CLV3/ESR signal peptide family. Post-translationally, the O-glycosylation (arabinosylation) of the hydroxyproline Pro-113 enhances binding affinity of the CLE12p peptide for its receptor. Mostly expressed in seedlings, roots, flowers, stems and apex, and, to a lower extent, in leaves and siliques.

The protein resides in the secreted. It localises to the extracellular space. In terms of biological role, extracellular signal peptide that regulates cell fate. Represses root apical meristem maintenance. The polypeptide is CLAVATA3/ESR (CLE)-related protein 12 (Arabidopsis thaliana (Mouse-ear cress)).